We begin with the raw amino-acid sequence, 329 residues long: Pantothenate kinase (329 aa).

A disordered region spans residues 1-22 (MPAQGPSHGELPPADAGRESSP). 107–114 (GSVAVGKS) is a binding site for ATP.

The protein belongs to the prokaryotic pantothenate kinase family.

The protein resides in the cytoplasm. It carries out the reaction (R)-pantothenate + ATP = (R)-4'-phosphopantothenate + ADP + H(+). The protein operates within cofactor biosynthesis; coenzyme A biosynthesis; CoA from (R)-pantothenate: step 1/5. The polypeptide is Pantothenate kinase (Nocardioides sp. (strain ATCC BAA-499 / JS614)).